The sequence spans 885 residues: MNAFKLSALARLTATMGFLGGMGSAMADQQLVDQLSQLKLNVKMLDNRAGENGVDCAALGADWASCNRVLFTLSNDGQAIDGKDWVIYFHSPRQTLRVDNDQFKIAHLTGDLYKLEPTAKFSGFPAGKAVEIPVVAEYWQLFRNDFLPRWYATSGDAKPKMLANTDTENLDQFVAPFTGDQWKRTKDDKNILMTPASRFVSNADLQTLPAGALRGKIVPTPMQVKVHAQDADLRKGVALDLSTLVKPAADVVSQRFALLGVPVQTNGYPIKTDIQPGKFKGAMAVSGAYELKIGKKEAQVIGFDQAGVFYGLQSILSLVPSDGSGKIATLDASDAPRFPYRGIFLDVARNFHKKDAVLRLLDQMAAYKLNKFHFHLSDDEGWRIEIPGLPELTEVGGQRCHDLSETTCLLPQYGQGPDVYGGFFSRQDYIDIIKYAQARQIEVIPEIDMPAHARAAVVSMEARYKKLHAAGKEQEANEFRLVDPTDTSNTTSVQFFNRQSYLNPCLDSSQRFVDKVIGEIAQMHKEAGQPIKTWHFGGDEAKNIRLGAGYTDKAKPEPGKGIIDQSNEDKPWAKSQVCQTMIKEGKVADMEHLPSYFGQEVSKLVKAHGIDRMQAWQDGLKDAESSKAFATSRVGVNFWDTLYWGGFDSVNDWANKGYEVVVSNPDYVYMDFPYEVNPDERGYYWGTRFSDERKVFSFAPDNMPQNAETSVDRDGNHFNAKSDKPWPGAYGLSAQLWSETQRTDPQMEYMIFPRALSVAERSWHRAGWEQDYRAGREYKGGETHFVDTQALEKDWLRFANILGQRELAKLDKGGVAYRLPVPGARVAAGKLEANIALPGLGIEYSTDGGKQWQRYDAKAKPAVSGEVQVRSVSPDGKRYSRAEKV.

Positions 1–27 (MNAFKLSALARLTATMGFLGGMGSAMA) are cleaved as a signal peptide. Disulfide bonds link Cys-56–Cys-66, Cys-400–Cys-408, and Cys-505–Cys-578. Glu-540 serves as the catalytic Proton donor. The disordered stretch occupies residues 866 to 885 (EVQVRSVSPDGKRYSRAEKV). The span at 875 to 885 (DGKRYSRAEKV) shows a compositional bias: basic and acidic residues.

Belongs to the glycosyl hydrolase 20 family. As to quaternary structure, monomer.

It is found in the periplasm. The enzyme catalyses Hydrolysis of terminal non-reducing N-acetyl-D-hexosamine residues in N-acetyl-beta-D-hexosaminides.. Its pathway is glycan degradation; chitin degradation. Digests the beta-1,4-glycosidic bonds in N-acetylglucosamine (GlcNAc) oligomers (mainly dimers). This Serratia marcescens protein is Chitobiase (chb).